Consider the following 163-residue polypeptide: Putative phosphinothricin acetyltransferase YwnH (163 aa).

Residues 1–158 enclose the N-acetyltransferase domain; it reads MTLRLAEHRD…DGKRYDLKIL (158 aa). Acetyl-CoA is bound by residues 85–87, 94–98, and 124–126; these read IYI, KGVGS, and NKP.

It belongs to the acetyltransferase family. PAT/BAR subfamily.

The enzyme catalyses phosphinothricin + acetyl-CoA = N-acetylphosphinothricin + CoA + H(+). Functionally, this enzyme is an effector of phosphinothricin tripeptide (PTT or bialaphos) resistance. Inactivates PTT by transfer of an acetyl group. This chain is Putative phosphinothricin acetyltransferase YwnH (ywnH), found in Bacillus subtilis (strain 168).